Reading from the N-terminus, the 218-residue chain is Guanylate kinase (218 aa).

One can recognise a Guanylate kinase-like domain in the interval Gly-15–Arg-194. Ser-22 to Thr-29 is an ATP binding site.

The protein belongs to the guanylate kinase family.

The protein resides in the cytoplasm. It carries out the reaction GMP + ATP = GDP + ADP. Functionally, essential for recycling GMP and indirectly, cGMP. The sequence is that of Guanylate kinase from Rhodospirillum rubrum (strain ATCC 11170 / ATH 1.1.1 / DSM 467 / LMG 4362 / NCIMB 8255 / S1).